Consider the following 33-residue polypeptide: Photosystem II reaction center protein T (33 aa).

The helical transmembrane segment at 3 to 23 threads the bilayer; sequence ALVYTFLLVSTLGIIFFAIFF.

It belongs to the PsbT family. In terms of assembly, PSII is composed of 1 copy each of membrane proteins PsbA, PsbB, PsbC, PsbD, PsbE, PsbF, PsbH, PsbI, PsbJ, PsbK, PsbL, PsbM, PsbT, PsbY, PsbZ, Psb30/Ycf12, at least 3 peripheral proteins of the oxygen-evolving complex and a large number of cofactors. It forms dimeric complexes.

Its subcellular location is the plastid. The protein resides in the chloroplast thylakoid membrane. In terms of biological role, found at the monomer-monomer interface of the photosystem II (PS II) dimer, plays a role in assembly and dimerization of PSII. PSII is a light-driven water plastoquinone oxidoreductase, using light energy to abstract electrons from H(2)O, generating a proton gradient subsequently used for ATP formation. The chain is Photosystem II reaction center protein T from Arabidopsis thaliana (Mouse-ear cress).